The primary structure comprises 657 residues: tRNA 5-methylaminomethyl-2-thiouridine biosynthesis bifunctional protein MnmC (657 aa).

A tRNA (mnm(5)s(2)U34)-methyltransferase region spans residues 1-236 (MPDRLVPATL…KRAMLVGEYA (236 aa)). Positions 261-657 (IGAGVAGCAV…LRARQVSAAD (397 aa)) are FAD-dependent cmnm(5)s(2)U34 oxidoreductase.

This sequence in the N-terminal section; belongs to the methyltransferase superfamily. tRNA (mnm(5)s(2)U34)-methyltransferase family. In the C-terminal section; belongs to the DAO family. FAD serves as cofactor.

The protein localises to the cytoplasm. It catalyses the reaction 5-aminomethyl-2-thiouridine(34) in tRNA + S-adenosyl-L-methionine = 5-methylaminomethyl-2-thiouridine(34) in tRNA + S-adenosyl-L-homocysteine + H(+). In terms of biological role, catalyzes the last two steps in the biosynthesis of 5-methylaminomethyl-2-thiouridine (mnm(5)s(2)U) at the wobble position (U34) in tRNA. Catalyzes the FAD-dependent demodification of cmnm(5)s(2)U34 to nm(5)s(2)U34, followed by the transfer of a methyl group from S-adenosyl-L-methionine to nm(5)s(2)U34, to form mnm(5)s(2)U34. This is tRNA 5-methylaminomethyl-2-thiouridine biosynthesis bifunctional protein MnmC from Burkholderia multivorans (strain ATCC 17616 / 249).